A 77-amino-acid chain; its full sequence is DNA-directed RNA polymerase subunit epsilon (77 aa).

The protein belongs to the RNA polymerase subunit epsilon family. RNAP is composed of a core of 2 alpha, a beta and a beta' subunit. The core is associated with a delta subunit, and at least one of epsilon or omega. When a sigma factor is associated with the core the holoenzyme is formed, which can initiate transcription.

The catalysed reaction is RNA(n) + a ribonucleoside 5'-triphosphate = RNA(n+1) + diphosphate. A non-essential component of RNA polymerase (RNAP). The chain is DNA-directed RNA polymerase subunit epsilon from Streptococcus pneumoniae (strain P1031).